The sequence spans 275 residues: DNA polymerase II subunit B4 (275 aa).

Residues 11–17 mediate DNA binding; the sequence is LPLAIVR. Residues 112-122 show a composition bias toward low complexity; that stretch reads ASYPAGGAALK. The segment at 112–275 is disordered; the sequence is ASYPAGGAAL…EEVESDEEDE (164 aa). The short motif at 135 to 142 is the Nuclear localization signal element; that stretch reads KKRKQEEP. Basic and acidic residues predominate over residues 151–161; it reads SKIDEETKRND. Residues 152–179 are a coiled coil; it reads KIDEETKRNDEETENDNTEEENGNDEED. Composition is skewed to acidic residues over residues 162-237 and 266-275; these read EETE…EESG and EEVESDEEDE.

This sequence belongs to the NFYB/HAP3 subunit family. As to quaternary structure, heterotrimeric transcription factor composed of three components, NF-YA, NF-YB and NF-YC. NF-YB and NF-YC must interact and dimerize for NF-YA association and DNA binding. Binds directly with DPB3-1.

It is found in the nucleus. Its function is as follows. Component of the NF-Y/HAP transcription factor complex. The NF-Y complex stimulates the transcription of various genes by recognizing and binding to a CCAAT motif in promoters. This Arabidopsis thaliana (Mouse-ear cress) protein is DNA polymerase II subunit B4.